Consider the following 111-residue polypeptide: Secreted RxLR effector protein 81 (111 aa).

A signal peptide spans 1 to 16 (MLVSMLLIIFPNGVSL). A glycan (N-linked (GlcNAc...) asparagine) is linked at N52. Residues 73–92 (KKFSSSDEDKSRDVRRRLRP) form a disordered region. The RxLR-dEER motif lies at 88–91 (RRLR).

This sequence belongs to the RxLR effector family.

It is found in the secreted. It localises to the host nucleus. The protein localises to the host cytoplasm. Its function is as follows. Secreted effector that partially suppresses the host cell death induced by cell death-inducing proteins. The protein is Secreted RxLR effector protein 81 of Plasmopara viticola (Downy mildew of grapevine).